We begin with the raw amino-acid sequence, 224 residues long: Urease accessory protein UreF (224 aa).

Belongs to the UreF family. As to quaternary structure, ureD, UreF and UreG form a complex that acts as a GTP-hydrolysis-dependent molecular chaperone, activating the urease apoprotein by helping to assemble the nickel containing metallocenter of UreC. The UreE protein probably delivers the nickel.

The protein localises to the cytoplasm. Its function is as follows. Required for maturation of urease via the functional incorporation of the urease nickel metallocenter. This chain is Urease accessory protein UreF, found in Pseudomonas putida (strain W619).